Consider the following 119-residue polypeptide: Large ribosomal subunit protein uL18 (119 aa).

This sequence belongs to the universal ribosomal protein uL18 family. As to quaternary structure, part of the 50S ribosomal subunit; part of the 5S rRNA/L5/L18/L25 subcomplex. Contacts the 5S and 23S rRNAs.

Its function is as follows. This is one of the proteins that bind and probably mediate the attachment of the 5S RNA into the large ribosomal subunit, where it forms part of the central protuberance. The protein is Large ribosomal subunit protein uL18 of Xanthomonas axonopodis pv. citri (strain 306).